A 210-amino-acid chain; its full sequence is TM2 domain-containing protein C02F5.13 (210 aa).

The first 18 residues, 1 to 18 (MRRLPWLIPFFLVNISNG), serve as a signal peptide directing secretion. Residues 19–138 (NNEFRIEFEY…PRTFTKSTPC (120 aa)) are Extracellular-facing. N-linked (GlcNAc...) asparagine glycosylation is present at Asn-91. A helical transmembrane segment spans residues 139 to 159 (IIYNGHYFLTTLLYSIFLGVV). The TM2 domain maps to 143–191 (GHYFLTTLLYSIFLGVVAVDRFCLGYSAMAVGKLMTLGGFGIWWIVDIF). At 160-178 (AVDRFCLGYSAMAVGKLMT) the chain is on the cytoplasmic side. The chain crosses the membrane as a helical span at residues 179 to 199 (LGGFGIWWIVDIFLLVLGVLG). Topologically, residues 200–210 (PADDSSWEPYY) are extracellular.

Belongs to the TM2 family.

The protein resides in the membrane. This is TM2 domain-containing protein C02F5.13 from Caenorhabditis elegans.